The primary structure comprises 499 residues: Ubiquitin carboxyl-terminal hydrolase 16 (499 aa).

The USP domain maps to 53 to 497 (VGLINRGNDC…YAYMLYYERV (445 aa)). The active-site Nucleophile is Cys-62. The active-site Proton acceptor is His-407.

This sequence belongs to the peptidase C19 family.

It carries out the reaction Thiol-dependent hydrolysis of ester, thioester, amide, peptide and isopeptide bonds formed by the C-terminal Gly of ubiquitin (a 76-residue protein attached to proteins as an intracellular targeting signal).. In Saccharomyces cerevisiae (strain ATCC 204508 / S288c) (Baker's yeast), this protein is Ubiquitin carboxyl-terminal hydrolase 16 (UBP16).